Consider the following 93-residue polypeptide: Cobalt transport protein CbiN (93 aa).

Helical transmembrane passes span 5–25 (LILL…DHGG) and 62–82 (SLLF…ILGY).

It belongs to the CbiN family. As to quaternary structure, forms an energy-coupling factor (ECF) transporter complex composed of an ATP-binding protein (A component, CbiO), a transmembrane protein (T component, CbiQ) and 2 possible substrate-capture proteins (S components, CbiM and CbiN) of unknown stoichimetry.

The protein localises to the cell inner membrane. It functions in the pathway cofactor biosynthesis; adenosylcobalamin biosynthesis. Part of the energy-coupling factor (ECF) transporter complex CbiMNOQ involved in cobalt import. The polypeptide is Cobalt transport protein CbiN (Citrobacter koseri (strain ATCC BAA-895 / CDC 4225-83 / SGSC4696)).